Here is a 334-residue protein sequence, read N- to C-terminus: MTPIDAKRPLQLNDQGQLRHFLSLDGLPRELLTEILDTADSFLEVGARAVKKVPLLRGKTVCNVFFENSTRTRTTFELAAQRLSADVISLNVSTSSTSKGETLFDTLRNLEAMAADMFVVRHSDSGAAHFIAEHVCPEVAVINGGDGRHAHPTQGMLDMLTIRRHKGSFENLSVAIVGDILHSRVARSDMLALKALGCPDIRVIGPKTLIPIGIEQYGVKVYTDLAEGLKDVDVVIMLRLQRERMAGGLLPSEGEFYRLFGLTTARLAGAKPDAIVMHPGPINRGVEIESAVADGKHSVILNQVTYGIAVRMAVLSMAMSGQNAQRQLDQENAQ.

Residues Arg-71 and Thr-72 each coordinate carbamoyl phosphate. Lys-99 contributes to the L-aspartate binding site. Arg-121, His-151, and Gln-154 together coordinate carbamoyl phosphate. The L-aspartate site is built by Arg-184 and Arg-239. Gly-280 and Pro-281 together coordinate carbamoyl phosphate.

It belongs to the aspartate/ornithine carbamoyltransferase superfamily. ATCase family. As to quaternary structure, heterododecamer (2C3:3R2) of six catalytic PyrB chains organized as two trimers (C3), and six regulatory PyrI chains organized as three dimers (R2).

The enzyme catalyses carbamoyl phosphate + L-aspartate = N-carbamoyl-L-aspartate + phosphate + H(+). Its pathway is pyrimidine metabolism; UMP biosynthesis via de novo pathway; (S)-dihydroorotate from bicarbonate: step 2/3. In terms of biological role, catalyzes the condensation of carbamoyl phosphate and aspartate to form carbamoyl aspartate and inorganic phosphate, the committed step in the de novo pyrimidine nucleotide biosynthesis pathway. The polypeptide is Aspartate carbamoyltransferase catalytic subunit (Pseudomonas putida (strain ATCC 47054 / DSM 6125 / CFBP 8728 / NCIMB 11950 / KT2440)).